The sequence spans 156 residues: Small ribosomal subunit protein uS7 (156 aa).

Belongs to the universal ribosomal protein uS7 family. In terms of assembly, part of the 30S ribosomal subunit. Contacts proteins S9 and S11.

Its function is as follows. One of the primary rRNA binding proteins, it binds directly to 16S rRNA where it nucleates assembly of the head domain of the 30S subunit. Is located at the subunit interface close to the decoding center, probably blocks exit of the E-site tRNA. The polypeptide is Small ribosomal subunit protein uS7 (Thermosynechococcus vestitus (strain NIES-2133 / IAM M-273 / BP-1)).